We begin with the raw amino-acid sequence, 20 residues long: Cruzioseptin-15 (20 aa).

As to expression, expressed by the skin glands.

It localises to the secreted. In terms of biological role, has antimicrobial activity. The chain is Cruzioseptin-15 from Cruziohyla calcarifer (Splendid leaf frog).